We begin with the raw amino-acid sequence, 194 residues long: MSDSFALIPLPLVDQRYAQALFDFVQEARSVENVEKAVASFLVVLDQHEDLKRFVQSPFFSIKEQIKVMRSVCENIKFADQGAGQILSNFLRVITVNRRLCALSGILQAFQHRVALSRREVSAQIISARPLSSHQEEELRVALEGVVRGKVLLHMCVDPTILGGLIIRLGSSQIDTSLVTKLSSLKLALKKEVS.

This sequence belongs to the ATPase delta chain family. As to quaternary structure, F-type ATPases have 2 components, F(1) - the catalytic core - and F(0) - the membrane proton channel. F(1) has five subunits: alpha(3), beta(3), gamma(1), delta(1), epsilon(1). F(0) has three main subunits: a(1), b(2) and c(10-14). The alpha and beta chains form an alternating ring which encloses part of the gamma chain. F(1) is attached to F(0) by a central stalk formed by the gamma and epsilon chains, while a peripheral stalk is formed by the delta and b chains.

The protein resides in the cell inner membrane. In terms of biological role, f(1)F(0) ATP synthase produces ATP from ADP in the presence of a proton or sodium gradient. F-type ATPases consist of two structural domains, F(1) containing the extramembraneous catalytic core and F(0) containing the membrane proton channel, linked together by a central stalk and a peripheral stalk. During catalysis, ATP synthesis in the catalytic domain of F(1) is coupled via a rotary mechanism of the central stalk subunits to proton translocation. Functionally, this protein is part of the stalk that links CF(0) to CF(1). It either transmits conformational changes from CF(0) to CF(1) or is implicated in proton conduction. This is ATP synthase subunit delta from Bartonella quintana (strain Toulouse) (Rochalimaea quintana).